A 24-amino-acid polypeptide reads, in one-letter code: Coenzyme PQQ synthesis protein A (24 aa).

A cross-link (pyrroloquinoline quinone (Glu-Tyr)) is located at residues 16-20; that stretch reads EVTMY.

Belongs to the PqqA family.

It functions in the pathway cofactor biosynthesis; pyrroloquinoline quinone biosynthesis. Required for coenzyme pyrroloquinoline quinone (PQQ) biosynthesis. PQQ is probably formed by cross-linking a specific glutamate to a specific tyrosine residue and excising these residues from the peptide. The sequence is that of Coenzyme PQQ synthesis protein A from Pseudomonas fluorescens (strain Pf0-1).